Reading from the N-terminus, the 167-residue chain is Large ribosomal subunit protein uL10 (167 aa).

The protein belongs to the universal ribosomal protein uL10 family. As to quaternary structure, part of the ribosomal stalk of the 50S ribosomal subunit. The N-terminus interacts with L11 and the large rRNA to form the base of the stalk. The C-terminus forms an elongated spine to which L12 dimers bind in a sequential fashion forming a multimeric L10(L12)X complex.

Functionally, forms part of the ribosomal stalk, playing a central role in the interaction of the ribosome with GTP-bound translation factors. The polypeptide is Large ribosomal subunit protein uL10 (Chromohalobacter salexigens (strain ATCC BAA-138 / DSM 3043 / CIP 106854 / NCIMB 13768 / 1H11)).